Here is a 138-residue protein sequence, read N- to C-terminus: Cellular retinoic acid-binding protein 2 (138 aa).

Residues 21–31 (KALGVNMMMRK) carry the Nuclear localization signal motif. K102 is covalently cross-linked (Glycyl lysine isopeptide (Lys-Gly) (interchain with G-Cter in SUMO)). 133–135 (RVY) lines the all-trans-retinoate pocket.

Belongs to the calycin superfamily. Fatty-acid binding protein (FABP) family. As to quaternary structure, interacts with importin alpha. Interacts with RXR and RARA. Sumoylated in response to retinoic acid binding, sumoylation is critical for dissociation from ER and subsequent nuclear translocation. In terms of tissue distribution, embryo and skin of adult mouse.

It is found in the cytoplasm. It localises to the endoplasmic reticulum. The protein resides in the nucleus. Transports retinoic acid to the nucleus. Regulates the access of retinoic acid to the nuclear retinoic acid receptors. This chain is Cellular retinoic acid-binding protein 2 (Crabp2), found in Mus musculus (Mouse).